A 249-amino-acid chain; its full sequence is ATP synthase subunit a, chloroplastic (249 aa).

5 helical membrane passes run 40–60, 97–117, 136–156, 201–221, and 222–242; these read QVLI…VLAV, VPFI…GALL, INTT…AGLS, LVVV…VMFL, and GLFT…AYIG.

Belongs to the ATPase A chain family. In terms of assembly, F-type ATPases have 2 components, CF(1) - the catalytic core - and CF(0) - the membrane proton channel. CF(1) has five subunits: alpha(3), beta(3), gamma(1), delta(1), epsilon(1). CF(0) has four main subunits: a, b, b' and c.

The protein localises to the plastid. The protein resides in the chloroplast thylakoid membrane. In terms of biological role, key component of the proton channel; it plays a direct role in the translocation of protons across the membrane. The chain is ATP synthase subunit a, chloroplastic from Draba nemorosa (Woodland whitlowgrass).